The primary structure comprises 305 residues: MIKQRTLKRIVQATGVGLHTGKKVTLTLRPAPANTGVIYRRTDLNPPVDFPADAKSVRDTMLCTCLVNEHDVRISTVEHLNAALAGLGIDNIIVEVDAPEIPIMDGSAAPFVYLLVDAGIDELNVAKKFVRIKETVRVEDGDKWAEFKPYNGFSLDFTIDFNHPAIDASNQRYCMNFSADAFMRQISRARTFGFMRDIEYLQSRGLCLGGSFDCAIVVDDYRVLNEDGLRFEDEFVRHKMLDAIGDLFMCGHNIIGAFTAYKSGHALNNKLLQAVLAKQEAWEYVTYEDEAELPLAFKAPSLVLA.

Residues H79, H238, and D242 each coordinate Zn(2+). Catalysis depends on H265, which acts as the Proton donor.

It belongs to the LpxC family. Requires Zn(2+) as cofactor.

The catalysed reaction is a UDP-3-O-[(3R)-3-hydroxyacyl]-N-acetyl-alpha-D-glucosamine + H2O = a UDP-3-O-[(3R)-3-hydroxyacyl]-alpha-D-glucosamine + acetate. It functions in the pathway glycolipid biosynthesis; lipid IV(A) biosynthesis; lipid IV(A) from (3R)-3-hydroxytetradecanoyl-[acyl-carrier-protein] and UDP-N-acetyl-alpha-D-glucosamine: step 2/6. Its function is as follows. Catalyzes the hydrolysis of UDP-3-O-myristoyl-N-acetylglucosamine to form UDP-3-O-myristoylglucosamine and acetate, the committed step in lipid A biosynthesis. This is UDP-3-O-acyl-N-acetylglucosamine deacetylase from Cronobacter sakazakii (strain ATCC BAA-894) (Enterobacter sakazakii).